We begin with the raw amino-acid sequence, 108 residues long: UPF0145 protein SYNPCC7002_A1337 (108 aa).

This sequence belongs to the UPF0145 family.

This chain is UPF0145 protein SYNPCC7002_A1337, found in Picosynechococcus sp. (strain ATCC 27264 / PCC 7002 / PR-6) (Agmenellum quadruplicatum).